Reading from the N-terminus, the 230-residue chain is UPF0173 metal-dependent hydrolase Sca_1312 (230 aa).

Belongs to the UPF0173 family.

This chain is UPF0173 metal-dependent hydrolase Sca_1312, found in Staphylococcus carnosus (strain TM300).